Reading from the N-terminus, the 421-residue chain is eIF5-mimic protein 1 (421 aa).

The disordered stretch occupies residues 1–24 (MNTGKQQKPVLTGQRFKTRKRDEK). Positions 250-417 (TQQTLGTRKE…QNAEEESESE (168 aa)) constitute a W2 domain.

It belongs to the BZW family.

It localises to the cytoplasm. In terms of biological role, translation initiation regulator which may repress non-AUG initiated translation and repeat-associated non-AUG (RAN) initiated translation by acting as a competitive inhibitor of eukaryotic translation initiation factor 5 (EIF5) function. This is eIF5-mimic protein 1 (bzw2) from Danio rerio (Zebrafish).